The chain runs to 117 residues: Large ribosomal subunit protein bL20 (117 aa).

This sequence belongs to the bacterial ribosomal protein bL20 family.

Its function is as follows. Binds directly to 23S ribosomal RNA and is necessary for the in vitro assembly process of the 50S ribosomal subunit. It is not involved in the protein synthesizing functions of that subunit. This is Large ribosomal subunit protein bL20 from Neorickettsia sennetsu (strain ATCC VR-367 / Miyayama) (Ehrlichia sennetsu).